A 313-amino-acid polypeptide reads, in one-letter code: tRNA dimethylallyltransferase (313 aa).

13-20 (GPTASGKT) contributes to the ATP binding site. Substrate is bound at residue 15–20 (TASGKT). Interaction with substrate tRNA regions lie at residues 38 to 41 (DSAL), 162 to 166 (QRLSR), 243 to 248 (RCVGYR), and 276 to 283 (KRQITWLR).

This sequence belongs to the IPP transferase family. As to quaternary structure, monomer. Mg(2+) serves as cofactor.

The catalysed reaction is adenosine(37) in tRNA + dimethylallyl diphosphate = N(6)-dimethylallyladenosine(37) in tRNA + diphosphate. In terms of biological role, catalyzes the transfer of a dimethylallyl group onto the adenine at position 37 in tRNAs that read codons beginning with uridine, leading to the formation of N6-(dimethylallyl)adenosine (i(6)A). This chain is tRNA dimethylallyltransferase, found in Aliivibrio salmonicida (strain LFI1238) (Vibrio salmonicida (strain LFI1238)).